We begin with the raw amino-acid sequence, 546 residues long: Probable T-complex protein 1 subunit theta (546 aa).

The disordered stretch occupies residues 527–546 (MSKPAGGPKPPGPNPHWDDD).

The protein belongs to the TCP-1 chaperonin family. Heterooligomeric complex of about 850 to 900 kDa that forms two stacked rings, 12 to 16 nm in diameter.

The protein resides in the cytoplasm. Functionally, molecular chaperone; assists the folding of proteins upon ATP hydrolysis. Known to play a role, in vitro, in the folding of actin and tubulin. The protein is Probable T-complex protein 1 subunit theta (cct8) of Schizosaccharomyces pombe (strain 972 / ATCC 24843) (Fission yeast).